We begin with the raw amino-acid sequence, 473 residues long: Response regulator protein FleR (473 aa).

Residues 4–118 form the Response regulatory domain; it reads KVLLVEDDRA…ALLDLVARHA (115 aa). Asp-53 is modified (4-aspartylphosphate). In terms of domain architecture, Sigma-54 factor interaction spans 130 to 359; the sequence is PVALEPASRQ…LDNAIQRALI (230 aa). ATP is bound by residues 158–165 and 221–230; these read GESGTGKE and ADGGTILLDE.

Member of the two-component regulatory system FleS/FleR that regulates the expression of multiple genes involved in flagellar synthesis, adhesion, swarming, motility and antibiotic resistance. May function as a transcriptional activator by direct binding to a cis-acting sequence upstream of the target genes. The polypeptide is Response regulator protein FleR (Pseudomonas aeruginosa (strain ATCC 15692 / DSM 22644 / CIP 104116 / JCM 14847 / LMG 12228 / 1C / PRS 101 / PAO1)).